The chain runs to 449 residues: Delta(8)-fatty-acid desaturase 1 (449 aa).

Positions 7-91 (KKYITNEDLK…IRDFQVSEVS (85 aa)) constitute a Cytochrome b5 heme-binding domain. Histidine 42 and histidine 65 together coordinate heme. A run of 2 helical transmembrane segments spans residues 113 to 133 (VTLY…YGVL) and 138 to 158 (VFAH…SAYI). Residues 160–164 (HDSGH) carry the Histidine box-1 motif. Residues 173-195 (YNRFAQLLSGNCLTGISIAWWKW) form a helical membrane-spanning segment. Positions 197 to 201 (HNAHH) match the Histidine box-2 motif. A run of 3 helical transmembrane segments spans residues 255–275 (YYPV…LLLF), 284–304 (ALNF…VSCL), and 311–331 (FFFV…FTLN). The short motif at 374–378 (QLEHH) is the Histidine box-3 element.

This sequence belongs to the fatty acid desaturase type 1 family. It depends on Fe cation as a cofactor. As to expression, highly expressed in flowers. Expressed in roots, leaves, stems and siliques.

The protein resides in the endoplasmic reticulum membrane. It carries out the reaction an N-acyl-(4R)-4-hydroxysphinganine + 2 Fe(II)-[cytochrome b5] + O2 + 2 H(+) = a (4R,8E)-4-hydroxysphingenine ceramide + 2 Fe(III)-[cytochrome b5] + 2 H2O. It catalyses the reaction an N-acyl-(4R)-4-hydroxysphinganine + 2 Fe(II)-[cytochrome b5] + O2 + 2 H(+) = a (4R,8Z)-4-hydroxysphing-8-enine ceramide + 2 Fe(III)-[cytochrome b5] + 2 H2O. Functionally, plays a major role as delta(8)-fatty-acid desaturase which introduces a double bond at the 8-position in the long-chain base (LCB) of ceramides with or without a hydroxy group at the 4-position. The enzyme produces both the 8E and 8Z isomers (in a 4:1 ratio). This structural modification contributes to the quantitative partitioning of ceramides between the two major sphingolipid classes, glucosylceramides and glycosylinositolphosphoryl ceramides. Sphingolipids are important membrane components involved in environmental stress responses, such as resistance to chilling, and act as cell signaling molecules. This Arabidopsis thaliana (Mouse-ear cress) protein is Delta(8)-fatty-acid desaturase 1 (SLD1).